The chain runs to 107 residues: Putative ankyrin repeat protein L14 (107 aa).

ANK repeat units lie at residues 19 to 48 (DNNY…NIRA), 49 to 78 (DNDC…NIRA), and 80 to 107 (NDCA…AVLS).

This chain is Putative ankyrin repeat protein L14, found in Acanthamoeba polyphaga (Amoeba).